The primary structure comprises 678 residues: Zinc finger translocation-associated protein (678 aa).

4 disordered regions span residues Met-1–Asp-100, Leu-182–Gly-250, Gln-329–His-417, and Leu-490–Pro-583. Positions Ser-62–Arg-78 are enriched in low complexity. Over residues Lys-79–Ala-88 the composition is skewed to basic and acidic residues. The segment covering Ala-187–Gly-201 has biased composition (acidic residues). Lys-375 is covalently cross-linked (Glycyl lysine isopeptide (Lys-Gly) (interchain with G-Cter in SUMO2)). Acidic residues predominate over residues Ala-388–Glu-398. Pro residues predominate over residues Pro-492 to Pro-504. Composition is skewed to acidic residues over residues Gly-513 to Gly-529 and Ala-543 to Gln-553. The span at Leu-560–Pro-572 shows a compositional bias: pro residues. Positions Arg-573 to Pro-583 are enriched in basic and acidic residues.

The protein is Zinc finger translocation-associated protein of Homo sapiens (Human).